Here is a 240-residue protein sequence, read N- to C-terminus: Probable transcriptional regulatory protein Nmul_A2722 (240 aa).

This sequence belongs to the TACO1 family.

The protein localises to the cytoplasm. The polypeptide is Probable transcriptional regulatory protein Nmul_A2722 (Nitrosospira multiformis (strain ATCC 25196 / NCIMB 11849 / C 71)).